A 243-amino-acid chain; its full sequence is UPF0758 protein SYNPCC7002_A0220 (243 aa).

One can recognise an MPN domain in the interval 112-235 (IIVDSPEAAA…FGSLRQKTAL (124 aa)). 3 residues coordinate Zn(2+): His184, His186, and Asp197. The JAMM motif motif lies at 184 to 197 (HNHPSGNVDPSPED).

Belongs to the UPF0758 family.

The polypeptide is UPF0758 protein SYNPCC7002_A0220 (Picosynechococcus sp. (strain ATCC 27264 / PCC 7002 / PR-6) (Agmenellum quadruplicatum)).